The sequence spans 334 residues: Leucine-rich repeat-containing protein 39 (334 aa).

A coiled-coil region spans residues 10–47 (AVNAVKEVWEKRIKKLNEDLKREKEFQQKLVRIWEERV). LRR repeat units follow at residues 84 to 105 (QLQE…IGRF), 107 to 128 (NLIV…IGLL), 130 to 151 (RLQE…LSYC), 153 to 176 (SLEK…SNLL), 177 to 198 (KLTH…VLNM), 200 to 221 (ALEW…IERM), 223 to 244 (NLHT…ISSM), 246 to 267 (NLST…MEKM), and 269 to 290 (NLRF…PPSE).

In terms of assembly, interacts with MYH7 (via C-terminus).

It is found in the cytoplasm. It localises to the myofibril. Its subcellular location is the sarcomere. The protein resides in the m line. Functionally, component of the sarcomeric M-band which plays a role in myocyte response to biomechanical stress. May regulate expression of other M-band proteins via an SRF-dependent pathway. Important for normal contractile function in heart. The sequence is that of Leucine-rich repeat-containing protein 39 from Bos taurus (Bovine).